A 391-amino-acid chain; its full sequence is DNA/RNA-binding protein KIN17 (391 aa).

The C2H2-type zinc finger occupies 28–50 (CQMCQKQCRDENGFKCHCMSESH). Positions 51–160 (QRQLLLASEN…RQLELEKKKK (110 aa)) are winged helix-turn-helix (wHTH). Lys135 is subject to N6,N6,N6-trimethyllysine; by METTL22; alternate. Lys135 bears the N6-methyllysine; alternate mark. 2 coiled-coil regions span residues 147–180 (ETIR…VRRG) and 252–275 (AKKK…TART). A disordered region spans residues 206 to 258 (NLNKGAGGSAGATTSKSSSLGPSALKLLGSAASGKRKESSQSSAQPAKKKKSA). The segment at 282-332 (GIVVKIITKKLGEKYHKKKGVVKEVIDRYTAVVKMTDSGDRLKLDQTHLET) is C-terminal subdomain A. The segment at 338–389 (GKRVLVLNGGYRGNEGTLESINEKAFSATIVIETGPLKGRRVEGIQYEDISK) is C-terminal subdomain B.

Belongs to the KIN17 family. In terms of assembly, associated with DNA polymerase alpha, RFC1 and cyclin A, in multiprotein DNA replication complexes. Also associates with replication origins at the G1/S phase boundary and throughout the S phase in vivo. As to expression, highly expressed in transformed mouse AtT20 neuroendocrine cells. Expressed at a lower level in testis, kidney, skeletal muscle, liver, lung, spleen, brain and heart and kidney. In testis, expressed at much higher levels in proliferating cells than in differentiating cells. Not detected in embryo.

The protein localises to the nucleus. It is found in the cytoplasm. Its function is as follows. Involved in DNA replication and the cellular response to DNA damage. May participate in DNA replication factories and create a bridge between DNA replication and repair mediated by high molecular weight complexes. May play a role in illegitimate recombination and regulation of gene expression. May participate in mRNA processing. Binds, in vitro, to double-stranded DNA. Also shown to bind preferentially to curved DNA in vitro and in vivo. Binds via its C-terminal domain to RNA in vitro. This is DNA/RNA-binding protein KIN17 from Mus musculus (Mouse).